The chain runs to 135 residues: Putative nickel-responsive regulator (135 aa).

Ni(2+) contacts are provided by H79, H90, H92, and C98.

The protein belongs to the transcriptional regulatory CopG/NikR family. Ni(2+) serves as cofactor.

In terms of biological role, transcriptional regulator. The polypeptide is Putative nickel-responsive regulator (Dictyoglomus thermophilum (strain ATCC 35947 / DSM 3960 / H-6-12)).